A 148-amino-acid polypeptide reads, in one-letter code: Large ribosomal subunit protein eL19 (148 aa).

Residues 52–76 (KPKKGISSYRSKKIAQQKKKGRRRG) are compositionally biased toward basic residues. Residues 52 to 95 (KPKKGISSYRSKKIAQQKKKGRRRGPGSIKGAKGARRPKKDEWM) are disordered.

The protein belongs to the eukaryotic ribosomal protein eL19 family. In terms of assembly, part of the 50S ribosomal subunit.

Functionally, binds to the 23S rRNA. This is Large ribosomal subunit protein eL19 from Methanothermobacter thermautotrophicus (strain ATCC 29096 / DSM 1053 / JCM 10044 / NBRC 100330 / Delta H) (Methanobacterium thermoautotrophicum).